A 322-amino-acid chain; its full sequence is Sideroflexin-2 (322 aa).

Met1 bears the N-acetylmethionine mark. A run of 5 helical transmembrane segments spans residues 100 to 122 (MIIT…WQWV), 142 to 164 (SVRQ…AVGM), 174 to 192 (LVGR…CVNI), 228 to 250 (VVIS…MERL), and 265 to 287 (PLQV…GLFP).

The protein belongs to the sideroflexin family. Widely expressed, highest levels in kidney, liver, and pancreas.

It localises to the mitochondrion inner membrane. The protein localises to the mitochondrion outer membrane. The catalysed reaction is L-serine(in) = L-serine(out). Its function is as follows. Mitochondrial amino-acid transporter that mediates transport of serine into mitochondria. Involved in mitochondrial iron homeostasis by regulating heme biosynthesis. This Homo sapiens (Human) protein is Sideroflexin-2.